The primary structure comprises 110 residues: Small heat shock protein hspG11 (110 aa).

The sHSP domain occupies 30 to 110 (KTIIDILPPM…KSTSTSSTFR (81 aa)). Positions 78 to 110 (KDLNKQHNNNNNNNNNNNNLVIEKSTSTSSTFR) are disordered. The segment covering 85-96 (NNNNNNNNNNNN) has biased composition (low complexity). Over residues 101–110 (KSTSTSSTFR) the composition is skewed to polar residues.

Belongs to the small heat shock protein (HSP20) family.

The chain is Small heat shock protein hspG11 (hspG11) from Dictyostelium discoideum (Social amoeba).